The sequence spans 222 residues: Uracil-DNA glycosylase (222 aa).

Aspartate 61 acts as the Proton acceptor in catalysis.

Belongs to the uracil-DNA glycosylase (UDG) superfamily. UNG family.

The protein resides in the cytoplasm. The catalysed reaction is Hydrolyzes single-stranded DNA or mismatched double-stranded DNA and polynucleotides, releasing free uracil.. In terms of biological role, excises uracil residues from the DNA which can arise as a result of misincorporation of dUMP residues by DNA polymerase or due to deamination of cytosine. The chain is Uracil-DNA glycosylase from Actinobacillus succinogenes (strain ATCC 55618 / DSM 22257 / CCUG 43843 / 130Z).